Reading from the N-terminus, the 258-residue chain is Isoprenyl transferase (258 aa).

D38 is a catalytic residue. D38 lines the Mg(2+) pocket. Substrate contacts are provided by residues 39-42 (GNGR), W43, R51, H55, and 83-85 (STE). Catalysis depends on N86, which acts as the Proton acceptor. Substrate is bound by residues W87, R89, R206, and 212–214 (RIS). Position 225 (E225) interacts with Mg(2+).

Belongs to the UPP synthase family. Homodimer. Requires Mg(2+) as cofactor.

Catalyzes the condensation of isopentenyl diphosphate (IPP) with allylic pyrophosphates generating different type of terpenoids. This is Isoprenyl transferase from Bacillus thuringiensis subsp. konkukian (strain 97-27).